The following is a 582-amino-acid chain: Hydrazine dehydrogenase (582 aa).

An N-terminal signal peptide occupies residues 1-32; that stretch reads MRKFLKVTLASALIGCGVIGTVSSLMVKEAKA. Heme c contacts are provided by cysteine 121, cysteine 124, histidine 125, histidine 141, cysteine 151, cysteine 154, histidine 155, histidine 159, cysteine 170, cysteine 175, histidine 176, histidine 191, cysteine 216, cysteine 219, histidine 220, cysteine 227, cysteine 230, histidine 231, histidine 234, cysteine 247, cysteine 250, histidine 251, histidine 267, cysteine 297, cysteine 300, histidine 301, histidine 306, cysteine 342, cysteine 345, histidine 346, histidine 454, and tyrosine 462. The interval 561–582 is disordered; the sequence is GSHSAHHHESGHDPAARSMKEH. A compositionally biased stretch (basic and acidic residues) spans 567–582; that stretch reads HHESGHDPAARSMKEH.

As to quaternary structure, homotrimer; subunits are linked by two covalent bonds between Tyr-462 of one subunit and heme P460 of an adjacent subunit. May form 24-mer of an octamer of trimers. Heme c serves as cofactor.

Its subcellular location is the anammoxosome. It carries out the reaction hydrazine + 4 Fe(III)-[cytochrome c] = N2 + 4 Fe(II)-[cytochrome c] + 4 H(+). It functions in the pathway nitrogen metabolism. With respect to regulation, is strongly and competitively inhibited by NO and hydroxylamine. Its function is as follows. Catalyzes the four-electron oxidation of hydrazine to N2. The electrons derived from hydrazine oxidation may be transferred to the quinone pool and exploited to promote the generation of proton-motive force (pmf) across the anammoxosome membrane. Is involved in anaerobic ammonium oxidation (anammox), a biological process in which nitrite is used as the electron acceptor in the conversion of ammonium to dinitrogen gas (N2) and water; this bacterial process has a major role in the Earth's nitrogen cycle and has been estimated to synthesize up to 50% of the dinitrogen gas emitted into our atmosphere from the oceans. Cannot oxidize hydroxylamine to NO. In Kuenenia stuttgartiensis, this protein is Hydrazine dehydrogenase.